A 698-amino-acid chain; its full sequence is G1/S-specific cyclin CCN1 (698 aa).

Residues 1 to 11 show a composition bias toward low complexity; it reads MTSLQQQQQQQ. 5 disordered regions span residues 1–21, 277–326, 469–577, 599–619, and 659–698; these read MTSL…PHHI, QKKQ…DDED, DEDE…GSIL, SNSS…EKRY, and NNTN…QYHQ. The span at 277-302 shows a compositional bias: polar residues; that stretch reads QKKQKKAFSSNSSRTTTASYTHQNQS. 2 stretches are compositionally biased toward acidic residues: residues 310-326 and 469-480; these read DEDI…DDED and DEDENVSTDDEA. Polar residues-rich tracts occupy residues 493 to 520 and 528 to 567; these read DGNN…NHPQ and PSAT…SSFA. Polar residues predominate over residues 659 to 669; it reads NNTNSSSPLMN. Positions 670–690 are enriched in low complexity; the sequence is QQQQYYHQQQHQQQVTQSSLY.

It belongs to the cyclin family.

Essential for the control of the cell cycle at the G1/S (start) transition. Interacts with the CDC2 protein kinase to form MPF. The polypeptide is G1/S-specific cyclin CCN1 (CCN1) (Candida albicans (strain WO-1) (Yeast)).